Reading from the N-terminus, the 2892-residue chain is Inositol 1,4,5-trisphosphate receptor itr-1 (2892 aa).

Residues methionine 1–serine 2475 are Cytoplasmic-facing. MIR domains follow at residues glycine 192 to alanine 246, glutamine 319 to valine 379, glycine 386 to threonine 466, and asparagine 490 to valine 551. Arginine 357–arginine 361 is a binding site for 1D-myo-inositol 1,4,5-trisphosphate. 1D-myo-inositol 1,4,5-trisphosphate-binding positions include lysine 625 to arginine 628 and tyrosine 689 to lysine 691. A disordered region spans residues methionine 1030–threonine 1056. Over residues glycine 1034–alanine 1043 the composition is skewed to basic and acidic residues. The helical transmembrane segment at isoleucine 2476–tyrosine 2496 threads the bilayer. The Extracellular segment spans residues leucine 2497–serine 2514. Residues leucine 2515–leucine 2535 form a helical membrane-spanning segment. The Cytoplasmic portion of the chain corresponds to glutamine 2536–valine 2572. A helical transmembrane segment spans residues tyrosine 2573–phenylalanine 2593. Residues aspartate 2594–serine 2615 lie on the Extracellular side of the membrane. A helical transmembrane segment spans residues isoleucine 2616–leucine 2636. Topologically, residues tyrosine 2637–threonine 2735 are cytoplasmic. The segment covering alanine 2655 to cysteine 2666 has biased composition (polar residues). A disordered region spans residues alanine 2655–glutamate 2685. Residues phenylalanine 2736 to phenylalanine 2756 form a helical membrane-spanning segment. Topologically, residues glycine 2757–arginine 2892 are extracellular.

The protein belongs to the InsP3 receptor family. Interacts with myo-1, myo-2, unc-54/myo-4 and nmy-2. Also interacts with iri-1. As to expression, isoform a is expressed in the anterior cells of the pharyngeal terminal bulb, vulva, rectal epithelial cells, spicule protractor muscles of the proctodeum and male-specific neuron CP8 or CP9. Isoform d is expressed in the spermatheca, excretory cell, amphid socket cells, PDA motor neuron, spicule retractor muscles, gubernaculum retractor muscles, posterior oblique muscles, diagonal muscles and the vas deferens. Also expressed in the intestine, pharynx, pharyngeal isthmus, pharyngeal intestinal valve, somatic gonad, hypodermal cells of the vulva, uterine sheath cells, tail, head, LUA motor neuron and the embryonic epidermis (at protein level).

It localises to the endoplasmic reticulum membrane. In terms of biological role, receptor for inositol 1,4,5-trisphosphate, a second messenger that regulates intracellular calcium homeostasis. Binds in vitro to both inositol 1,4,5-trisphosphate (1,4,5-InsP3) and inositol 2,4,5-trisphosphate (2,4,5-InsP3) with high affinity and does not discriminate between the phosphate at 1 or 2 position. Can also bind inositol 1,3,4,5-tetrakisphosphate (1,3,4,5-InsP4) and inositol 4,5-bisphosphate (4,5-InsP2), but with lower affinity. Acts as a timekeeper/rhythm generator via calcium signaling, affecting the defecation cycle and pharyngeal pumping. Affects normal hermaphrodite and male fertility as a participant in intracellular signaling by acting downstream of let-23/lin-3 which regulates ovulation, spermathecal valve dilation and male mating behavior. Important for early embryonic development; controls epidermal cell migration and may also regulate filopodial protrusive activity during epithelial morphogenesis. Component of inositol trisphosphate (IP3)-mediated downstream signaling pathways that controls amphid sensory neuronal (ASH)-mediated response to nose touch and benzaldehyde but not other ASH-mediated responses. Involved in modulating lifespan, acting downstream of transcription factor atf-6. In Caenorhabditis elegans, this protein is Inositol 1,4,5-trisphosphate receptor itr-1.